The primary structure comprises 306 residues: MLNEFINFETISRSDWQRFYQEDQVSLTPEELESIRSLNDKIDVQEVRDIYLPLINLIRIYHRAAEDLTFSKGIFLQKAQANRPFIIGISGSVAVGKSTTSRLLQLLLQRTFPKAKVDMVTTDGFLFPNQVLIDKGILNRKGFPESYDMPLLLNFLDTVKNGGDVNIPVYSHEIYDIVPGLTQKISQPNFLIVEGINVFQNPINQRLYMSDYFDFSIYIDADVKNIKTWYLERFQTLLELARKDENNYYHRFTKLTKEEALSLAQKTWKEINLVNLENYIEPTRNRAELILHKGDSHKIDLIHLKK.

91–98 (GSVAVGKS) lines the ATP pocket.

Belongs to the prokaryotic pantothenate kinase family.

It localises to the cytoplasm. It carries out the reaction (R)-pantothenate + ATP = (R)-4'-phosphopantothenate + ADP + H(+). It functions in the pathway cofactor biosynthesis; coenzyme A biosynthesis; CoA from (R)-pantothenate: step 1/5. This chain is Pantothenate kinase, found in Streptococcus thermophilus (strain ATCC BAA-491 / LMD-9).